A 507-amino-acid chain; its full sequence is Protein adenylyltransferase fic-1 (507 aa).

Residues 40–56 form a helical membrane-spanning segment; sequence YSLTTVVLVSLVVTLVC. TPR repeat units follow at residues 146–179 and 180–213; these read AILAAKAASRSRRDGNLERAVTIMEHAMALAPNN and PQILIEMGQIREMHNELVEADQCYVKALAYDPGN. The Inhibitory (S/T)XXXE(G/N) motif motif lies at 269–274; sequence TVAIEG. Position 273 (Glu273) interacts with ATP. Residues 325 to 460 enclose the Fido domain; the sequence is ISIDDILEMH…LRPFVRYVAK (136 aa). An O-AMP-threonine; by autocatalysis modification is found at Thr351. 356-359 serves as a coordination point for ATP; sequence VGKF. The active site involves His403. ATP-binding positions include 407–414, 439–440, and Asn447; these read DGNGRTAR and YY. O-AMP-threonine; by autocatalysis is present on Thr475. Residues 482 to 507 form a disordered region; it reads NGEEPNLTAEESKVSEKIETECRAGS. A compositionally biased stretch (basic and acidic residues) spans 491 to 507; sequence EESKVSEKIETECRAGS.

Belongs to the fic family. As to quaternary structure, forms homodimers; homodimerization might be required for adenylyltransferase activity.

It is found in the endoplasmic reticulum membrane. It localises to the nucleus membrane. It carries out the reaction L-tyrosyl-[protein] + ATP = O-(5'-adenylyl)-L-tyrosyl-[protein] + diphosphate. The enzyme catalyses L-threonyl-[protein] + ATP = 3-O-(5'-adenylyl)-L-threonyl-[protein] + diphosphate. The catalysed reaction is 3-O-(5'-adenylyl)-L-threonyl-[protein] + H2O = L-threonyl-[protein] + AMP + H(+). With respect to regulation, the side chain of Glu-273 determines which of the two opposing activities (AMPylase or de-AMPylase) will take place. In response to endoplasmic reticulum stress, mediates de-AMPylase activity. Adenylyltransferase activity is inhibited by the inhibitory helix present at the N-terminus: Glu-273 binds ATP and competes with ATP-binding at Arg-414, thereby preventing adenylyltransferase activity. In unstressed cells, disengagement of Glu-273 promotes adenylyltransferase activity. Activation dissociates ATP-binding from Glu-273, allowing ordered binding of the entire ATP moiety with the alpha-phosphate in an orientation that is productive for accepting an incoming target hydroxyl side chain. Protein that can both mediate the addition of adenosine 5'-monophosphate (AMP) to specific residues of target proteins (AMPylation), and the removal of the same modification from target proteins (de-AMPylation), depending on the context. The side chain of Glu-273 determines which of the two opposing activities (AMPylase or de-AMPylase) will take place. Adenylyltransferase that mediates the addition of adenosine 5'-monophosphate (AMP) to specific residues of target proteins. In vivo target proteins include the heat-shock 70 family proteins hsp-1 and hsp-3 and the translation elongation factors eef-1A, eef-1G and eef-2. Can AMPylate core histone H3 in vitro. Can also act as a phosphodiesterase by mediating removal of ATP (de-AMPylation) from target proteins. Decreases susceptibility to P.aeruginosa-mediated killing and might therefore play a role in the innate immune response. This is Protein adenylyltransferase fic-1 (fic-1) from Caenorhabditis briggsae.